The primary structure comprises 388 residues: tRNA(Ile)-lysidine synthase (388 aa).

51–56 (SGGRDS) is an ATP binding site.

Belongs to the tRNA(Ile)-lysidine synthase family.

The protein resides in the cytoplasm. It carries out the reaction cytidine(34) in tRNA(Ile2) + L-lysine + ATP = lysidine(34) in tRNA(Ile2) + AMP + diphosphate + H(+). In terms of biological role, ligates lysine onto the cytidine present at position 34 of the AUA codon-specific tRNA(Ile) that contains the anticodon CAU, in an ATP-dependent manner. Cytidine is converted to lysidine, thus changing the amino acid specificity of the tRNA from methionine to isoleucine. This Bifidobacterium longum (strain NCC 2705) protein is tRNA(Ile)-lysidine synthase.